A 501-amino-acid polypeptide reads, in one-letter code: Lysine--tRNA ligase (501 aa).

Residues glutamate 411 and glutamate 418 each coordinate Mg(2+).

This sequence belongs to the class-II aminoacyl-tRNA synthetase family. In terms of assembly, homodimer. Requires Mg(2+) as cofactor.

Its subcellular location is the cytoplasm. It catalyses the reaction tRNA(Lys) + L-lysine + ATP = L-lysyl-tRNA(Lys) + AMP + diphosphate. The polypeptide is Lysine--tRNA ligase (Pseudomonas aeruginosa (strain ATCC 15692 / DSM 22644 / CIP 104116 / JCM 14847 / LMG 12228 / 1C / PRS 101 / PAO1)).